The sequence spans 510 residues: Protein disulfide-isomerase (510 aa).

An N-terminal signal peptide occupies residues 1–19; the sequence is MLRRALLCLAVAAAPGLYA. The 117-residue stretch at 20-136 folds into the Thioredoxin 1 domain; that stretch reads DAPEEEDHVL…IVNWLKKRTG (117 aa). Residues Cys-55 and Cys-58 each act as nucleophile in the active site. Residues Cys-55 and Cys-58 are joined by a disulfide bond. Lys-202 is subject to N6-acetyllysine. N6-succinyllysine is present on residues Lys-224 and Lys-273. Ser-333 and Ser-359 each carry phosphoserine. The Thioredoxin 2 domain maps to 351 to 477; sequence GKIKPHLMSQ…FKKFLESGGQ (127 aa). Residues Cys-399 and Cys-402 each act as nucleophile in the active site. A disulfide bond links Cys-399 and Cys-402. At Ser-429 the chain carries Phosphoserine. The segment at 473-510 is disordered; it reads ESGGQDGAGDDDDLEDLEEAEEPDMEEDDDQKAVKDEL. The span at 480–502 shows a compositional bias: acidic residues; that stretch reads AGDDDDLEDLEEAEEPDMEEDDD. Residues 507 to 510 carry the Prevents secretion from ER motif; sequence KDEL.

The protein belongs to the protein disulfide isomerase family. In terms of assembly, heterodimer; heterodimerizes with the protein microsomal triglyceride transfer MTTP. Homodimer. Homodimer. Monomers and homotetramers may also occur. Interacts with P4HA2, forming a heterotetramer consisting of 2 alpha subunits (P4HA2) and 2 beta (P4HB), where P4HB plays the role of a structural subunit; this tetramer catalyzes the formation of 4-hydroxyproline in collagen. Also constitutes the structural subunit of the microsomal triacylglycerol transfer protein MTTP in mammalian cells. Stabilizes both enzymes and retain them in the ER without contributing to the catalytic activity. Binds UBQLN1. Interacts with ERO1B. Interacts with ILDR2. Interacts with ERN1/IRE1A (via N-terminus); the interaction is enhanced by phosphorylation of P4HB by FAM20C in response to endoplasmic reticulum stress and results in attenuation of ERN1 activity. Phosphorylation of Ser-359 by FAM20C is induced by endoplasmic reticulum stress and results in a functional switch from oxidoreductase to molecular chaperone. It also promotes interaction with ERN1.

The protein resides in the endoplasmic reticulum. It is found in the endoplasmic reticulum lumen. The protein localises to the melanosome. It localises to the cell membrane. It carries out the reaction Catalyzes the rearrangement of -S-S- bonds in proteins.. This multifunctional protein catalyzes the formation, breakage and rearrangement of disulfide bonds. At the cell surface, seems to act as a reductase that cleaves disulfide bonds of proteins attached to the cell. May therefore cause structural modifications of exofacial proteins. Inside the cell, seems to form/rearrange disulfide bonds of nascent proteins. At high concentrations and following phosphorylation by FAM20C, functions as a chaperone that inhibits aggregation of misfolded proteins. At low concentrations, facilitates aggregation (anti-chaperone activity). May be involved with other chaperones in the structural modification of the TG precursor in hormone biogenesis. Also acts as a structural subunit of various enzymes such as prolyl 4-hydroxylase and microsomal triacylglycerol transfer protein MTTP. Receptor for LGALS9; the interaction retains P4HB at the cell surface of Th2 T helper cells, increasing disulfide reductase activity at the plasma membrane, altering the plasma membrane redox state and enhancing cell migration. The sequence is that of Protein disulfide-isomerase (P4HB) from Macaca fuscata fuscata (Japanese macaque).